The chain runs to 136 residues: Small ribosomal subunit protein eS17B (136 aa).

This sequence belongs to the eukaryotic ribosomal protein eS17 family. As to quaternary structure, component of the small ribosomal subunit (SSU). Mature yeast ribosomes consist of a small (40S) and a large (60S) subunit. The 40S small subunit contains 1 molecule of ribosomal RNA (18S rRNA) and 33 different proteins (encoded by 57 genes). The large 60S subunit contains 3 rRNA molecules (25S, 5.8S and 5S rRNA) and 46 different proteins (encoded by 81 genes).

Its subcellular location is the cytoplasm. In terms of biological role, component of the ribosome, a large ribonucleoprotein complex responsible for the synthesis of proteins in the cell. The small ribosomal subunit (SSU) binds messenger RNAs (mRNAs) and translates the encoded message by selecting cognate aminoacyl-transfer RNA (tRNA) molecules. The large subunit (LSU) contains the ribosomal catalytic site termed the peptidyl transferase center (PTC), which catalyzes the formation of peptide bonds, thereby polymerizing the amino acids delivered by tRNAs into a polypeptide chain. The nascent polypeptides leave the ribosome through a tunnel in the LSU and interact with protein factors that function in enzymatic processing, targeting, and the membrane insertion of nascent chains at the exit of the ribosomal tunnel. The polypeptide is Small ribosomal subunit protein eS17B (Saccharomyces cerevisiae (strain ATCC 204508 / S288c) (Baker's yeast)).